The primary structure comprises 159 residues: 2-C-methyl-D-erythritol 2,4-cyclodiphosphate synthase (159 aa).

A divalent metal cation-binding residues include Asp10 and His12. 4-CDP-2-C-methyl-D-erythritol 2-phosphate is bound by residues 10 to 12 (DVH) and 37 to 38 (HS). His45 provides a ligand contact to a divalent metal cation. Residues 59–61 (DIG), 64–68 (FPDTD), 103–109 (AQAPKML), 135–138 (TTTE), Phe142, and Arg145 each bind 4-CDP-2-C-methyl-D-erythritol 2-phosphate.

The protein belongs to the IspF family. As to quaternary structure, homotrimer. It depends on a divalent metal cation as a cofactor.

It carries out the reaction 4-CDP-2-C-methyl-D-erythritol 2-phosphate = 2-C-methyl-D-erythritol 2,4-cyclic diphosphate + CMP. It participates in isoprenoid biosynthesis; isopentenyl diphosphate biosynthesis via DXP pathway; isopentenyl diphosphate from 1-deoxy-D-xylulose 5-phosphate: step 4/6. Functionally, involved in the biosynthesis of isopentenyl diphosphate (IPP) and dimethylallyl diphosphate (DMAPP), two major building blocks of isoprenoid compounds. Catalyzes the conversion of 4-diphosphocytidyl-2-C-methyl-D-erythritol 2-phosphate (CDP-ME2P) to 2-C-methyl-D-erythritol 2,4-cyclodiphosphate (ME-CPP) with a corresponding release of cytidine 5-monophosphate (CMP). This chain is 2-C-methyl-D-erythritol 2,4-cyclodiphosphate synthase, found in Francisella philomiragia subsp. philomiragia (strain ATCC 25017 / CCUG 19701 / FSC 153 / O#319-036).